The primary structure comprises 510 residues: Nucleosome assembly protein 1-like 3 (510 aa).

2 disordered regions span residues 1-99 and 161-311; these read MAEA…LGTN and PTEE…KRED. Over residues 35 to 74 the composition is skewed to low complexity; that stretch reads SSSSSSSTSGSSSSSSTSGSSSSSGSGSSSSSSGSGSTSS. Over residues 161 to 182 the composition is skewed to acidic residues; sequence PTEEECEWNSEDEEFSSDEEVQ. 3 stretches are compositionally biased toward basic and acidic residues: residues 200 to 229, 235 to 246, and 254 to 300; these read PKEN…EVPK, KAEEKADSKDCM, and EDPK…VDLK.

This sequence belongs to the nucleosome assembly protein (NAP) family.

The protein localises to the nucleus. The polypeptide is Nucleosome assembly protein 1-like 3 (NAP1L3) (Pongo abelii (Sumatran orangutan)).